We begin with the raw amino-acid sequence, 774 residues long: DNA ligase (774 aa).

NAD(+)-binding positions include 36–40 (DAVYD), 85–86 (SL), and glutamate 161. Lysine 163 functions as the N6-AMP-lysine intermediate in the catalytic mechanism. NAD(+)-binding residues include arginine 184, glutamate 221, lysine 341, and lysine 365. Positions 459, 462, 477, and 482 each coordinate Zn(2+). Positions 693–774 (VQSGLLRGKT…LLEALAVTGI (82 aa)) constitute a BRCT domain.

Belongs to the NAD-dependent DNA ligase family. LigA subfamily. Requires Mg(2+) as cofactor. Mn(2+) serves as cofactor.

The enzyme catalyses NAD(+) + (deoxyribonucleotide)n-3'-hydroxyl + 5'-phospho-(deoxyribonucleotide)m = (deoxyribonucleotide)n+m + AMP + beta-nicotinamide D-nucleotide.. DNA ligase that catalyzes the formation of phosphodiester linkages between 5'-phosphoryl and 3'-hydroxyl groups in double-stranded DNA using NAD as a coenzyme and as the energy source for the reaction. It is essential for DNA replication and repair of damaged DNA. In Trichodesmium erythraeum (strain IMS101), this protein is DNA ligase.